Reading from the N-terminus, the 252-residue chain is tRNA1(Val) (adenine(37)-N6)-methyltransferase (252 aa).

This sequence belongs to the methyltransferase superfamily. tRNA (adenine-N(6)-)-methyltransferase family.

The protein resides in the cytoplasm. The catalysed reaction is adenosine(37) in tRNA1(Val) + S-adenosyl-L-methionine = N(6)-methyladenosine(37) in tRNA1(Val) + S-adenosyl-L-homocysteine + H(+). In terms of biological role, specifically methylates the adenine in position 37 of tRNA(1)(Val) (anticodon cmo5UAC). In Proteus mirabilis (strain HI4320), this protein is tRNA1(Val) (adenine(37)-N6)-methyltransferase.